The sequence spans 117 residues: Ribonuclease P protein component (117 aa).

It belongs to the RnpA family. In terms of assembly, consists of a catalytic RNA component (M1 or rnpB) and a protein subunit.

The catalysed reaction is Endonucleolytic cleavage of RNA, removing 5'-extranucleotides from tRNA precursor.. Functionally, RNaseP catalyzes the removal of the 5'-leader sequence from pre-tRNA to produce the mature 5'-terminus. It can also cleave other RNA substrates such as 4.5S RNA. The protein component plays an auxiliary but essential role in vivo by binding to the 5'-leader sequence and broadening the substrate specificity of the ribozyme. The polypeptide is Ribonuclease P protein component (Staphylococcus aureus (strain bovine RF122 / ET3-1)).